The primary structure comprises 127 residues: Small ribosomal subunit protein uS12 (127 aa).

A compositionally biased stretch (basic residues) spans 11-20; that stretch reads GRKPKKKKSK. The interval 11-30 is disordered; sequence GRKPKKKKSKAPALQGNPQK. A 3-methylthioaspartic acid modification is found at Asp89. Positions 105-127 are disordered; that stretch reads AGVEGRRQSRSKYGAKRPKDQKK. The span at 112 to 127 shows a compositional bias: basic residues; that stretch reads QSRSKYGAKRPKDQKK.

The protein belongs to the universal ribosomal protein uS12 family. As to quaternary structure, part of the 30S ribosomal subunit. Contacts proteins S8 and S17. May interact with IF1 in the 30S initiation complex.

Functionally, with S4 and S5 plays an important role in translational accuracy. In terms of biological role, interacts with and stabilizes bases of the 16S rRNA that are involved in tRNA selection in the A site and with the mRNA backbone. Located at the interface of the 30S and 50S subunits, it traverses the body of the 30S subunit contacting proteins on the other side and probably holding the rRNA structure together. The combined cluster of proteins S8, S12 and S17 appears to hold together the shoulder and platform of the 30S subunit. This Thermotoga maritima (strain ATCC 43589 / DSM 3109 / JCM 10099 / NBRC 100826 / MSB8) protein is Small ribosomal subunit protein uS12.